Consider the following 218-residue polypeptide: Octanoyltransferase (218 aa).

A BPL/LPL catalytic domain is found at 31–206 (REAADEVWLV…QLVKHLDYAE (176 aa)). Substrate-binding positions include 70–77 (RGGQVTYH), 137–139 (SLG), and 150–152 (GLA). The active-site Acyl-thioester intermediate is the Cys168.

The protein belongs to the LipB family.

It is found in the cytoplasm. It catalyses the reaction octanoyl-[ACP] + L-lysyl-[protein] = N(6)-octanoyl-L-lysyl-[protein] + holo-[ACP] + H(+). Its pathway is protein modification; protein lipoylation via endogenous pathway; protein N(6)-(lipoyl)lysine from octanoyl-[acyl-carrier-protein]: step 1/2. In terms of biological role, catalyzes the transfer of endogenously produced octanoic acid from octanoyl-acyl-carrier-protein onto the lipoyl domains of lipoate-dependent enzymes. Lipoyl-ACP can also act as a substrate although octanoyl-ACP is likely to be the physiological substrate. In Pseudomonas savastanoi pv. phaseolicola (strain 1448A / Race 6) (Pseudomonas syringae pv. phaseolicola (strain 1448A / Race 6)), this protein is Octanoyltransferase.